The sequence spans 90 residues: MSSTSQKHRDFVAEPMGEKSVQCLAGIGDTLGRRLEEKGFDKAYVVLGQFLVLKKDEELFKEWLKDACSANAKQSRDCYGCLKEWCDAFL.

It belongs to the BAF family. In terms of assembly, homodimer. Interacts with nemp1a and nemp1b.

It localises to the nucleus. The protein localises to the chromosome. The protein resides in the nucleus envelope. Its subcellular location is the cytoplasm. Non-specific DNA-binding protein that plays key roles in mitotic nuclear reassembly, chromatin organization, DNA damage response, gene expression and intrinsic immunity against foreign DNA. Contains two non-specific double-stranded DNA (dsDNA)-binding sites which promote DNA cross-bridging. Plays a key role in nuclear membrane reformation at the end of mitosis by driving formation of a single nucleus in a spindle-independent manner. Transiently cross-bridges anaphase chromosomes via its ability to bridge distant DNA sites, leading to the formation of a dense chromatin network at the chromosome ensemble surface that limits membranes to the surface. Also acts as a negative regulator of innate immune activation by restricting CGAS activity toward self-DNA upon acute loss of nuclear membrane integrity. Outcompetes CGAS for DNA-binding, thereby preventing CGAS activation and subsequent damaging autoinflammatory responses. Also involved in DNA damage response; acts by inhibiting the ADP-ribosyltransferase activity of PARP1. Involved in the recognition of exogenous dsDNA in the cytosol: associates with exogenous dsDNA immediately after its appearance in the cytosol at endosome breakdown and is required to avoid autophagy. The chain is Barrier-to-autointegration factor B (banf1-b) from Xenopus laevis (African clawed frog).